Reading from the N-terminus, the 465-residue chain is Botryococcus squalene synthase (465 aa).

NADP(+) is bound by residues R48 and R73. Mg(2+) is bound by residues D76, E79, and D80. 3 residues coordinate NADP(+): R215, K315, and R317. 2 helical membrane-spanning segments follow: residues 395–415 and 429–449; these read AIRL…FNLG and ILDL…LLVL.

The protein belongs to the phytoene/squalene synthase family.

The protein resides in the membrane. The enzyme catalyses presqualene diphosphate + NADPH + H(+) = squalene + diphosphate + NADP(+). Produces squalene when coexpressed with SSL-1 and bisfarnesyl ether and a very small amount of squalene when incubated alone in the presence of NADPH. In Botryococcus braunii (Green alga), this protein is Botryococcus squalene synthase (SSL-2).